The chain runs to 794 residues: Glutamine--tRNA ligase (794 aa).

Residues 192–217 (DNEKPKKKKEKPAKVEDKAAPVATSE) are disordered. Positions 277 to 287 (PEPNGYLHIGH) match the 'HIGH' region motif. ATP contacts are provided by residues 278 to 280 (EPN) and 284 to 290 (HIGHAKA). 2 residues coordinate L-glutamine: D310 and Y450. ATP is bound by residues T469, 498 to 499 (RL), and 506 to 508 (MSK). Positions 505–509 (VMSKR) match the 'KMSKS' region motif.

This sequence belongs to the class-I aminoacyl-tRNA synthetase family.

It carries out the reaction tRNA(Gln) + L-glutamine + ATP = L-glutaminyl-tRNA(Gln) + AMP + diphosphate. This chain is Glutamine--tRNA ligase, found in Lupinus luteus (European yellow lupine).